The chain runs to 340 residues: Phosphoribosylformylglycinamidine cyclo-ligase (340 aa).

Belongs to the AIR synthase family.

It localises to the cytoplasm. The enzyme catalyses 2-formamido-N(1)-(5-O-phospho-beta-D-ribosyl)acetamidine + ATP = 5-amino-1-(5-phospho-beta-D-ribosyl)imidazole + ADP + phosphate + H(+). It participates in purine metabolism; IMP biosynthesis via de novo pathway; 5-amino-1-(5-phospho-D-ribosyl)imidazole from N(2)-formyl-N(1)-(5-phospho-D-ribosyl)glycinamide: step 2/2. This Streptococcus pyogenes serotype M28 (strain MGAS6180) protein is Phosphoribosylformylglycinamidine cyclo-ligase.